The following is a 230-amino-acid chain: UPF0758 protein Daud_1467 (230 aa).

Residues 108–230 (TVRTPEEAAG…FTSLKLEGLF (123 aa)) enclose the MPN domain. Zn(2+)-binding residues include His179, His181, and Asp192. The JAMM motif motif lies at 179–192 (HNHPSGDPAPSPQD).

It belongs to the UPF0758 family.

The polypeptide is UPF0758 protein Daud_1467 (Desulforudis audaxviator (strain MP104C)).